Reading from the N-terminus, the 437-residue chain is Sorting nexin-30 (437 aa).

The segment at 1–45 (MAGGPPKALPSTGPQSLRDMPHPLAGSSSEEAVGGDSTPSPDLLM) is disordered. T38 bears the Phosphothreonine mark. Position 40 is a phosphoserine (S40). In terms of domain architecture, PX spans 89–210 (RDLFVTVDDP…VFLTAKDLNA (122 aa)). The a 1,2-diacyl-sn-glycero-3-phospho-(1D-myo-inositol-3-phosphate) site is built by R132, Q134, K162, and R176. The BAR domain maps to 234–437 (KLRSRPLEFA…PLLQEKQETK (204 aa)).

Belongs to the sorting nexin family. As to quaternary structure, heterodimer; heterodimerizes with SNX4.

Its subcellular location is the early endosome membrane. In terms of biological role, involved in the regulation of endocytosis and in several stages of intracellular trafficking. Together with SNX4, involved in autophagosome assembly. The sequence is that of Sorting nexin-30 from Mus musculus (Mouse).